The following is a 444-amino-acid chain: Trigger factor (444 aa).

The region spanning 165–250 is the PPIase FKBP-type domain; it reads GDFAKFDFEG…LHEIQELKIP (86 aa).

Belongs to the FKBP-type PPIase family. Tig subfamily.

The protein resides in the cytoplasm. The enzyme catalyses [protein]-peptidylproline (omega=180) = [protein]-peptidylproline (omega=0). Its function is as follows. Involved in protein export. Acts as a chaperone by maintaining the newly synthesized protein in an open conformation. Functions as a peptidyl-prolyl cis-trans isomerase. This Campylobacter jejuni subsp. jejuni serotype O:23/36 (strain 81-176) protein is Trigger factor.